The primary structure comprises 465 residues: Glutamate--tRNA ligase 1 (465 aa).

A 'HIGH' region motif is present at residues 8–18 (PSPTGNLHIGG). The 'KMSKS' region motif lies at 236–240 (KLSKR). Position 239 (lysine 239) interacts with ATP.

It belongs to the class-I aminoacyl-tRNA synthetase family. Glutamate--tRNA ligase type 1 subfamily. In terms of assembly, monomer.

Its subcellular location is the cytoplasm. The catalysed reaction is tRNA(Glu) + L-glutamate + ATP = L-glutamyl-tRNA(Glu) + AMP + diphosphate. Catalyzes the attachment of glutamate to tRNA(Glu) in a two-step reaction: glutamate is first activated by ATP to form Glu-AMP and then transferred to the acceptor end of tRNA(Glu). In Wolinella succinogenes (strain ATCC 29543 / DSM 1740 / CCUG 13145 / JCM 31913 / LMG 7466 / NCTC 11488 / FDC 602W) (Vibrio succinogenes), this protein is Glutamate--tRNA ligase 1.